We begin with the raw amino-acid sequence, 102 residues long: UPF0122 protein MPN_424 (102 aa).

This sequence belongs to the UPF0122 family.

In terms of biological role, might take part in the signal recognition particle (SRP) pathway. This is inferred from the conservation of its genetic proximity to ftsY/ffh. May be a regulatory protein. In Mycoplasma pneumoniae (strain ATCC 29342 / M129 / Subtype 1) (Mycoplasmoides pneumoniae), this protein is UPF0122 protein MPN_424.